A 207-amino-acid polypeptide reads, in one-letter code: Small ribosomal subunit protein uS4c (207 aa).

The 65-residue stretch at 92–156 (MRLDNILFRL…YQSIITKRIE (65 aa)) folds into the S4 RNA-binding domain.

This sequence belongs to the universal ribosomal protein uS4 family. Part of the 30S ribosomal subunit. Contacts protein S5. The interaction surface between S4 and S5 is involved in control of translational fidelity.

The protein resides in the plastid. It is found in the chloroplast. In terms of biological role, one of the primary rRNA binding proteins, it binds directly to 16S rRNA where it nucleates assembly of the body of the 30S subunit. Functionally, with S5 and S12 plays an important role in translational accuracy. This Equisetum sylvaticum (Wood horsetail) protein is Small ribosomal subunit protein uS4c (rps4).